The following is a 121-amino-acid chain: Large ribosomal subunit protein bL20 (121 aa).

Belongs to the bacterial ribosomal protein bL20 family.

Functionally, binds directly to 23S ribosomal RNA and is necessary for the in vitro assembly process of the 50S ribosomal subunit. It is not involved in the protein synthesizing functions of that subunit. The protein is Large ribosomal subunit protein bL20 of Chlamydia caviae (strain ATCC VR-813 / DSM 19441 / 03DC25 / GPIC) (Chlamydophila caviae).